A 55-amino-acid chain; its full sequence is Large ribosomal subunit protein bL33 (55 aa).

This sequence belongs to the bacterial ribosomal protein bL33 family.

In Acidothermus cellulolyticus (strain ATCC 43068 / DSM 8971 / 11B), this protein is Large ribosomal subunit protein bL33.